The primary structure comprises 438 residues: L-fucose-proton symporter (438 aa).

The Cytoplasmic segment spans residues 2–26; that stretch reads GNTSIQTQSYRAVDKDAGQSRSYII. A helical membrane pass occupies residues 27-53; that stretch reads PFALLCSLFFLWAVANNLNDILLPQFQ. The Periplasmic segment spans residues 54-61; it reads QAFTLTNF. The chain crosses the membrane as a helical span at residues 62 to 87; it reads QAGLIQSAFYFGYFIIPIPAGILMKK. Residues 88 to 90 lie on the Cytoplasmic side of the membrane; that stretch reads LSY. The helical transmembrane segment at 91 to 113 threads the bilayer; sequence KAGIITGLFLYALGAALFWPAAE. Over 114–117 the chain is Periplasmic; it reads IMNY. Residues 118 to 144 form a helical membrane-spanning segment; sequence TLFLVGLFIIAAGLGCLETAANPFVTV. Over 145-150 the chain is Cytoplasmic; that stretch reads LGPESS. A helical transmembrane segment spans residues 151 to 178; sequence GHFRLNLAQTFNSFGAIIAVVFGQSLIL. The Periplasmic segment spans residues 179 to 193; it reads SNVPHQSQDVLDKMS. A helical transmembrane segment spans residues 194 to 227; it reads PEQLSAYKHSLVLSVQTPYMIIVAIVLLVALLIM. The Cytoplasmic segment spans residues 228–257; that stretch reads LTKFPALQSDNHSDAKQGSFSASLSRLARI. A helical membrane pass occupies residues 258-287; the sequence is RHWRWAVLAQFCYVGAQTACWSYLIRYAVE. Residues 288 to 293 are Periplasmic-facing; the sequence is EIPGMT. A helical membrane pass occupies residues 294 to 319; that stretch reads AGFAANYLTGTMVCFFIGRFTGTWLI. At 320–324 the chain is on the cytoplasmic side; sequence SRFAP. The chain crosses the membrane as a helical span at residues 325-343; it reads HKVLAAYALIAMALCLISA. Residues 344-347 lie on the Periplasmic side of the membrane; it reads FAGG. Residues 348–372 form a helical membrane-spanning segment; sequence HVGLIALTLCSAFMSIQYPTIFSLG. The Cytoplasmic portion of the chain corresponds to 373–379; it reads IKNLGQD. Residues 380–407 form a helical membrane-spanning segment; sequence TKYGSSFIVMTIIGGGIVTPVMGFVSDA. Residues 408-410 are Periplasmic-facing; that stretch reads AGN. Residues 411-430 form a helical membrane-spanning segment; that stretch reads IPTAELIPALCFAVIFIFAR. Residues 431-438 lie on the Cytoplasmic side of the membrane; the sequence is FRSQTATN.

The protein belongs to the major facilitator superfamily. FHS transporter (TC 2.A.1.7) family.

It localises to the cell inner membrane. It carries out the reaction L-fucose(in) + H(+)(in) = L-fucose(out) + H(+)(out). It catalyses the reaction D-arabinose(out) + H(+)(out) = D-arabinose(in) + H(+)(in). The catalysed reaction is L-galactose(out) + H(+)(out) = L-galactose(in) + H(+)(in). Functionally, mediates the uptake of L-fucose across the boundary membrane with the concomitant transport of protons into the cell (symport system). Can also transport L-galactose and D-arabinose, but at reduced rates compared with L-fucose. Is not able to transport L-rhamnose and L-arabinose. Binds D-arabinose with the highest affinity, followed by L-fucose, and then by L-galactose. The sequence is that of L-fucose-proton symporter (fucP) from Escherichia coli (strain K12).